The sequence spans 224 residues: Large ribosomal subunit protein uL1 (224 aa).

The protein belongs to the universal ribosomal protein uL1 family. In terms of assembly, part of the 50S ribosomal subunit.

Its function is as follows. Binds directly to 23S rRNA. The L1 stalk is quite mobile in the ribosome, and is involved in E site tRNA release. Protein L1 is also a translational repressor protein, it controls the translation of the L11 operon by binding to its mRNA. This chain is Large ribosomal subunit protein uL1, found in Borrelia recurrentis (strain A1).